The sequence spans 507 residues: Phosphoprotein (507 aa).

A compositionally biased stretch (polar residues) spans 31–51 (EVSSLRDQTCNPGQENGTTGM). Disordered stretches follow at residues 31–86 (EVSS…CGER), 123–172 (IEDA…GYSF), and 242–307 (GIVA…DSEY). The span at 147-160 (SLDDSTEDSGEDYS) shows a compositional bias: acidic residues. Ser-151 carries the phosphoserine modification. Composition is skewed to polar residues over residues 246-271 (GSTS…SAGN) and 289-300 (SGTQLPPRTSNE). Positions 304–376 (DSEYDDELFS…LSSIMIAIPG (73 aa)) are multimerization. A coiled-coil region spans residues 310-339 (ELFSEIQEIRSAITKLTEDNQAILTKLDTL). An interaction with the nucleocapsid (N-RNA) region spans residues 459–507 (PSKAVLASLIRSSRVDQSHKHNMLALLKNIKGDDNLNEFYQMVKSITHA).

It belongs to the morbillivirus P protein family. As to quaternary structure, homotetramer. Interacts (via multimerization domain) with polymerase L; this interaction forms the polymerase L-P complex. Interacts (via N-terminus) with N0 (via Ncore); this interaction allows P to chaperon N0 to avoid N polymerization before encapsidation. Interacts (via C-terminus) with N-RNA template; this interaction positions the polymerase on the template for both transcription and replication. Post-translationally, phosphorylation on serines by host CK2 is necessary for the formation of viral factories.

Its function is as follows. Essential cofactor of the RNA polymerase L that plays a central role in the transcription and replication by forming the polymerase complex with RNA polymerase L and recruiting L to the genomic N-RNA template for RNA synthesis. Also plays a central role in the encapsidation of nascent RNA chains by forming the encapsidation complex with the nucleocapsid protein N (N-P complex). Acts as a chaperone for newly synthesized free N protein, so-called N0, allowing encapsidation of nascent RNA chains during replication. The nucleoprotein protein N prevents excessive phosphorylation of P, which leads to down-regulation of viral transcription/ replication. Participates, together with N, in the formation of viral factories (viroplasms), which are large inclusions in the host cytoplasm where replication takes place. The chain is Phosphoprotein (P/V) from Canine distemper virus (strain Onderstepoort) (CDV).